Here is a 184-residue protein sequence, read N- to C-terminus: ATP synthase subunit b, chloroplastic (184 aa).

Residues 27–49 (LATNPINLSVVFGVLIFFGKGVL) traverse the membrane as a helical segment.

Belongs to the ATPase B chain family. In terms of assembly, F-type ATPases have 2 components, F(1) - the catalytic core - and F(0) - the membrane proton channel. F(1) has five subunits: alpha(3), beta(3), gamma(1), delta(1), epsilon(1). F(0) has four main subunits: a(1), b(1), b'(1) and c(10-14). The alpha and beta chains form an alternating ring which encloses part of the gamma chain. F(1) is attached to F(0) by a central stalk formed by the gamma and epsilon chains, while a peripheral stalk is formed by the delta, b and b' chains.

The protein resides in the plastid. It is found in the chloroplast thylakoid membrane. Functionally, f(1)F(0) ATP synthase produces ATP from ADP in the presence of a proton or sodium gradient. F-type ATPases consist of two structural domains, F(1) containing the extramembraneous catalytic core and F(0) containing the membrane proton channel, linked together by a central stalk and a peripheral stalk. During catalysis, ATP synthesis in the catalytic domain of F(1) is coupled via a rotary mechanism of the central stalk subunits to proton translocation. In terms of biological role, component of the F(0) channel, it forms part of the peripheral stalk, linking F(1) to F(0). The protein is ATP synthase subunit b, chloroplastic of Barbarea verna (Land cress).